The following is a 525-amino-acid chain: GMP synthase [glutamine-hydrolyzing] (525 aa).

One can recognise a Glutamine amidotransferase type-1 domain in the interval 9–207; the sequence is RILILDFGSQ…ILDICGCEAL (199 aa). Cysteine 86 (nucleophile) is an active-site residue. Active-site residues include histidine 181 and glutamate 183. Positions 208–400 constitute a GMPS ATP-PPase domain; sequence WTPSKIAEDA…LGLPYDMVYR (193 aa). Position 235 to 241 (235 to 241) interacts with ATP; it reads SGGVDSS.

Homodimer.

It carries out the reaction XMP + L-glutamine + ATP + H2O = GMP + L-glutamate + AMP + diphosphate + 2 H(+). The protein operates within purine metabolism; GMP biosynthesis; GMP from XMP (L-Gln route): step 1/1. Its function is as follows. Catalyzes the synthesis of GMP from XMP. This chain is GMP synthase [glutamine-hydrolyzing], found in Pseudomonas fluorescens (strain ATCC BAA-477 / NRRL B-23932 / Pf-5).